The sequence spans 191 residues: Potassium-transporting ATPase KdpC subunit (191 aa).

A helical membrane pass occupies residues 6-26 (PALVLFILLTLLTGGVYPLLT).

It belongs to the KdpC family. The system is composed of three essential subunits: KdpA, KdpB and KdpC.

It localises to the cell inner membrane. Functionally, part of the high-affinity ATP-driven potassium transport (or Kdp) system, which catalyzes the hydrolysis of ATP coupled with the electrogenic transport of potassium into the cytoplasm. This subunit acts as a catalytic chaperone that increases the ATP-binding affinity of the ATP-hydrolyzing subunit KdpB by the formation of a transient KdpB/KdpC/ATP ternary complex. The protein is Potassium-transporting ATPase KdpC subunit of Klebsiella pneumoniae subsp. pneumoniae (strain ATCC 700721 / MGH 78578).